A 390-amino-acid chain; its full sequence is Enoyl-[acyl-carrier-protein] reductase [NADH], chloroplastic (390 aa).

The N-terminal 74 residues, 1–74 (MAATAASSLQ…CKRPFSFSTR (74 aa)), are a transit peptide targeting the chloroplast. 2 residues coordinate NADP(+): L53 and N170. The active-site Proton donor is S239. Positions 282 and 314 each coordinate NADP(+). The active-site Lowers pKa of active site Tyr is the K282.

The protein belongs to the short-chain dehydrogenases/reductases (SDR) family. FabI subfamily. Homotetramer. Expressed in flowers and siliques and at lower levels in roots and leaves (at protein level).

Its subcellular location is the plastid. The protein localises to the chloroplast. It carries out the reaction a 2,3-saturated acyl-[ACP] + NAD(+) = a (2E)-enoyl-[ACP] + NADH + H(+). It functions in the pathway lipid metabolism; fatty acid biosynthesis. Its activity is regulated as follows. Inhibited by the phytotoxin cyperin and the synthetic antimicrobial compound triclosan. Functionally, catalyzes the NAD-dependent reduction of a carbon-carbon double bond in an enoyl moiety that is covalently linked to an acyl carrier protein (ACP). Catalyzes the last reduction step in the de novo synthesis cycle of fatty acids. Involved in the elongation cycle of fatty acids which are used in lipid metabolism. Required for normal plant growth. This is Enoyl-[acyl-carrier-protein] reductase [NADH], chloroplastic (MOD1) from Arabidopsis thaliana (Mouse-ear cress).